The sequence spans 687 residues: Glycine--tRNA ligase beta subunit (687 aa).

This sequence belongs to the class-II aminoacyl-tRNA synthetase family. Tetramer of two alpha and two beta subunits.

Its subcellular location is the cytoplasm. It catalyses the reaction tRNA(Gly) + glycine + ATP = glycyl-tRNA(Gly) + AMP + diphosphate. The protein is Glycine--tRNA ligase beta subunit of Geotalea daltonii (strain DSM 22248 / JCM 15807 / FRC-32) (Geobacter daltonii).